Here is a 276-residue protein sequence, read N- to C-terminus: 2-dehydro-3-deoxyphosphooctonate aldolase (276 aa).

It belongs to the KdsA family.

Its subcellular location is the cytoplasm. The catalysed reaction is D-arabinose 5-phosphate + phosphoenolpyruvate + H2O = 3-deoxy-alpha-D-manno-2-octulosonate-8-phosphate + phosphate. It participates in carbohydrate biosynthesis; 3-deoxy-D-manno-octulosonate biosynthesis; 3-deoxy-D-manno-octulosonate from D-ribulose 5-phosphate: step 2/3. The protein operates within bacterial outer membrane biogenesis; lipopolysaccharide biosynthesis. The polypeptide is 2-dehydro-3-deoxyphosphooctonate aldolase (Helicobacter pylori (strain Shi470)).